The sequence spans 427 residues: MPSIEAVGAREILDSRGNPTVEVEVVLEDGTLGRAAVPSGASTGAFEAVELRDGEDRYGGKGVRKAVAAVIERIGPAIIELEATEQRLLDQTLIDLDGTPGKSALGANALLGVSLAVAKAAAAASGLPLFRYLGGPSAHLLPVPMLNILNGGAHADTNVDIQEFMIAPIGASSFSESLRWGAEVYHALKSVLKARGLGTGVGDEGGFAPSLPTNRDALDLIAEAVDKVGLRLGSDVALALDVASTEFYADGSYTFEGSTRTAEELSDYYAELVGAYPIVSIEDPLAEDDWSGWVALTERLGTKVQLVGDDLFVTNPERLARGIASKAANALLVKVNQIGTLTETLDAVNLAHRNGYRAMMSHRSGETEDTTIADLAVAVDCGQIKTGAPARSERVAKYNQLLRIEEELDDAARFAGAAAFPRHGQPA.

(2R)-2-phosphoglycerate is bound at residue Gln-162. Glu-204 (proton donor) is an active-site residue. Mg(2+) contacts are provided by Asp-241, Glu-282, and Asp-309. Residues Lys-334, Arg-363, Ser-364, and Lys-385 each contribute to the (2R)-2-phosphoglycerate site. Lys-334 serves as the catalytic Proton acceptor.

Belongs to the enolase family. Mg(2+) serves as cofactor.

The protein localises to the cytoplasm. The protein resides in the secreted. Its subcellular location is the cell surface. It carries out the reaction (2R)-2-phosphoglycerate = phosphoenolpyruvate + H2O. Its pathway is carbohydrate degradation; glycolysis; pyruvate from D-glyceraldehyde 3-phosphate: step 4/5. Functionally, catalyzes the reversible conversion of 2-phosphoglycerate (2-PG) into phosphoenolpyruvate (PEP). It is essential for the degradation of carbohydrates via glycolysis. The chain is Enolase from Frankia alni (strain DSM 45986 / CECT 9034 / ACN14a).